A 161-amino-acid polypeptide reads, in one-letter code: 3-isopropylmalate dehydratase small subunit 1 (161 aa).

This sequence belongs to the LeuD family. LeuD type 2 subfamily. In terms of assembly, heterodimer of LeuC and LeuD.

It catalyses the reaction (2R,3S)-3-isopropylmalate = (2S)-2-isopropylmalate. Its pathway is amino-acid biosynthesis; L-leucine biosynthesis; L-leucine from 3-methyl-2-oxobutanoate: step 2/4. Functionally, catalyzes the isomerization between 2-isopropylmalate and 3-isopropylmalate, via the formation of 2-isopropylmaleate. In Archaeoglobus fulgidus (strain ATCC 49558 / DSM 4304 / JCM 9628 / NBRC 100126 / VC-16), this protein is 3-isopropylmalate dehydratase small subunit 1 (leuD1).